Here is a 132-residue protein sequence, read N- to C-terminus: Small ribosomal subunit protein eS12 (132 aa).

The residue at position 2 (alanine 2) is an N-acetylalanine. At lysine 129 the chain carries N6-succinyllysine.

Belongs to the eukaryotic ribosomal protein eS12 family. As to quaternary structure, part of the small subunit (SSU) processome, composed of more than 70 proteins and the RNA chaperone small nucleolar RNA (snoRNA) U3. Subunit of the 40S ribosomal complex.

Its subcellular location is the nucleus. The protein localises to the nucleolus. In terms of biological role, part of the small subunit (SSU) processome, first precursor of the small eukaryotic ribosomal subunit. During the assembly of the SSU processome in the nucleolus, many ribosome biogenesis factors, an RNA chaperone and ribosomal proteins associate with the nascent pre-rRNA and work in concert to generate RNA folding, modifications, rearrangements and cleavage as well as targeted degradation of pre-ribosomal RNA by the RNA exosome. Subunit of the 40S ribosomal complex. This chain is Small ribosomal subunit protein eS12 (Rps12), found in Mus musculus (Mouse).